We begin with the raw amino-acid sequence, 214 residues long: MISFLRGPVAHIGLSAAVIDVGGVGMLVQATPKTLGTLRLGQESTLTTAMIVREDSMTLYGFADPDEREVFEILLTVSGIGPRLGLAVLAVLEPETIRVATSTGDGKTFTKVPGIGPKVAGRIVLELAGKLVPHGTVNGAPASPSAQWKPQVVAAMTSLGWSEKDALASVEKATADSPELISDGNVAEILRTTLRWLGQDGARTSAGRQVTARG.

The tract at residues 1–63 is domain I; it reads MISFLRGPVA…EDSMTLYGFA (63 aa). Residues 64 to 139 form a domain II region; sequence DPDEREVFEI…KLVPHGTVNG (76 aa). Positions 139–143 are flexible linker; it reads GAPAS. The interval 144-214 is domain III; that stretch reads PSAQWKPQVV…SAGRQVTARG (71 aa).

This sequence belongs to the RuvA family. As to quaternary structure, homotetramer. Forms an RuvA(8)-RuvB(12)-Holliday junction (HJ) complex. HJ DNA is sandwiched between 2 RuvA tetramers; dsDNA enters through RuvA and exits via RuvB. An RuvB hexamer assembles on each DNA strand where it exits the tetramer. Each RuvB hexamer is contacted by two RuvA subunits (via domain III) on 2 adjacent RuvB subunits; this complex drives branch migration. In the full resolvosome a probable DNA-RuvA(4)-RuvB(12)-RuvC(2) complex forms which resolves the HJ.

It is found in the cytoplasm. The RuvA-RuvB-RuvC complex processes Holliday junction (HJ) DNA during genetic recombination and DNA repair, while the RuvA-RuvB complex plays an important role in the rescue of blocked DNA replication forks via replication fork reversal (RFR). RuvA specifically binds to HJ cruciform DNA, conferring on it an open structure. The RuvB hexamer acts as an ATP-dependent pump, pulling dsDNA into and through the RuvAB complex. HJ branch migration allows RuvC to scan DNA until it finds its consensus sequence, where it cleaves and resolves the cruciform DNA. The chain is Holliday junction branch migration complex subunit RuvA from Renibacterium salmoninarum (strain ATCC 33209 / DSM 20767 / JCM 11484 / NBRC 15589 / NCIMB 2235).